The sequence spans 333 residues: Taste receptor type 2 member 38 (333 aa).

The Extracellular portion of the chain corresponds to 1 to 17 (MLTLTRICAVSYEVRST). The helical transmembrane segment at 18-38 (FLFISVLEFAVGFLTNAFIFL) threads the bilayer. Topologically, residues 39-55 (VNFWDVVKRQPLSNSDC) are cytoplasmic. The helical transmembrane segment at 56–76 (VLLCLSISRLFLHGLLFLSAI) threads the bilayer. Over 77 to 94 (QLTHFQKLSEPLNHSYQA) the chain is Extracellular. Residues 95 to 115 (IIMLWIIANQANLWLAACLSL) traverse the membrane as a helical segment. The Cytoplasmic segment spans residues 116–142 (LYCSKLIRFSHTFLICLASWVSRKISQ). A helical membrane pass occupies residues 143–163 (MLLGIILCSCICTVLCVWCFF). The Extracellular segment spans residues 164 to 190 (SRPHFTVTTFLFMNNNTRLNWQIKDLN). N-linked (GlcNAc...) asparagine glycosylation is present at Asn-178. A helical transmembrane segment spans residues 191-211 (LFYSFLFCYLWSVPPFLLFLV). Over 212–251 (SSGMLTVSLGRHMRTMKVYTRDSRDPSLEAHIKALKSLVS) the chain is Cytoplasmic. The helical transmembrane segment at 252-272 (FFCFFVISSCAAFISVPLLIL) threads the bilayer. At 273–276 (WRNK) the chain is on the extracellular side. A helical transmembrane segment spans residues 277 to 297 (IGVMVCVGIMAACPSGHAAVL). Residues 298–333 (ISGNATLRRAVTTILLWAQSSMKVRADHKADSRTLC) are Cytoplasmic-facing.

This sequence belongs to the G-protein coupled receptor T2R family.

It localises to the membrane. Functionally, receptor that may play a role in the perception of bitterness and is gustducin-linked. May play a role in sensing the chemical composition of the gastrointestinal content. The activity of this receptor may stimulate alpha gustducin, mediate PLC-beta-2 activation and lead to the gating of TRPM5. The chain is Taste receptor type 2 member 38 (TAS2R38) from Pongo pygmaeus (Bornean orangutan).